A 290-amino-acid polypeptide reads, in one-letter code: tRNA-cytidine(32) 2-sulfurtransferase (290 aa).

A PP-loop motif motif is present at residues 36 to 41 (SGGKDS). [4Fe-4S] cluster is bound by residues Cys111, Cys114, and Cys202. The disordered stretch occupies residues 259-290 (DPWLDAEDEEAEDCGEPAGDGVVSLGGARGGR). Residues 262-273 (LDAEDEEAEDCG) show a composition bias toward acidic residues.

Belongs to the TtcA family. In terms of assembly, homodimer. It depends on Mg(2+) as a cofactor. [4Fe-4S] cluster is required as a cofactor.

Its subcellular location is the cytoplasm. The catalysed reaction is cytidine(32) in tRNA + S-sulfanyl-L-cysteinyl-[cysteine desulfurase] + AH2 + ATP = 2-thiocytidine(32) in tRNA + L-cysteinyl-[cysteine desulfurase] + A + AMP + diphosphate + H(+). The protein operates within tRNA modification. Its function is as follows. Catalyzes the ATP-dependent 2-thiolation of cytidine in position 32 of tRNA, to form 2-thiocytidine (s(2)C32). The sulfur atoms are provided by the cysteine/cysteine desulfurase (IscS) system. In Anaeromyxobacter dehalogenans (strain 2CP-C), this protein is tRNA-cytidine(32) 2-sulfurtransferase.